A 312-amino-acid chain; its full sequence is Taste receptor type 2 member 135 (312 aa).

Residues 1–19 (MSTGHTVLGCQTTDKTVVT) are Extracellular-facing. A helical transmembrane segment spans residues 20 to 40 (LFIILVLLCLVAVVGNGFIII). Residues 41 to 66 (ALGMKWLLRRTLSAHNKLLISLAASR) lie on the Cytoplasmic side of the membrane. A helical transmembrane segment spans residues 67 to 87 (FCLQCVVIGKNIYVFLNPTSF). Residues 88 to 97 (PYNPVIQLLN) are Extracellular-facing. Residues 98–118 (LMWDFLTAATIWLCSLLGFFY) form a helical membrane-spanning segment. At 119 to 140 (CVKIATLTHPVFVWLKYRLPGW) the chain is on the cytoplasmic side. Residues 141 to 161 (VPWMLLSAVGMSSLTSILCFI) form a helical membrane-spanning segment. At 162–198 (GNYMIYQNHAKSGHQPWNVTGNSLRHSLEKFYFFSIK) the chain is on the extracellular side. Asn-179 carries N-linked (GlcNAc...) asparagine glycosylation. Residues 199 to 219 (IIMWTIPTVVFSIFMSLLLVS) traverse the membrane as a helical segment. Topologically, residues 220–244 (LVRHMKKTFLALSELRDVWAQAHFK) are cytoplasmic. Residues 245 to 265 (ALLPLLSFIVLFISCFLTLVL) form a helical membrane-spanning segment. Over 266 to 277 (SSASNTPYQEFR) the chain is Extracellular. The chain crosses the membrane as a helical span at residues 278 to 298 (YWMWQVVIHLCTVIHPIVILF). Residues 299–312 (SNPVLRVVIKRGCC) are Cytoplasmic-facing.

The protein belongs to the G-protein coupled receptor T2R family.

It is found in the membrane. Functionally, putative taste receptor which may play a role in the perception of bitterness. The polypeptide is Taste receptor type 2 member 135 (Tas2r135) (Mus musculus (Mouse)).